The primary structure comprises 372 residues: Chorismate synthase (372 aa).

Position 48 (Arg-48) interacts with NADP(+). FMN is bound by residues 125–127 (RSS), Gly-285, 300–304 (KPTPS), and Arg-327.

It belongs to the chorismate synthase family. Requires FMNH2 as cofactor.

The enzyme catalyses 5-O-(1-carboxyvinyl)-3-phosphoshikimate = chorismate + phosphate. It participates in metabolic intermediate biosynthesis; chorismate biosynthesis; chorismate from D-erythrose 4-phosphate and phosphoenolpyruvate: step 7/7. Functionally, catalyzes the anti-1,4-elimination of the C-3 phosphate and the C-6 proR hydrogen from 5-enolpyruvylshikimate-3-phosphate (EPSP) to yield chorismate, which is the branch point compound that serves as the starting substrate for the three terminal pathways of aromatic amino acid biosynthesis. This reaction introduces a second double bond into the aromatic ring system. In Methanocella arvoryzae (strain DSM 22066 / NBRC 105507 / MRE50), this protein is Chorismate synthase.